The chain runs to 341 residues: Phenylalanine--tRNA ligase alpha subunit (341 aa).

Residue Glu-259 coordinates Mg(2+).

The protein belongs to the class-II aminoacyl-tRNA synthetase family. Phe-tRNA synthetase alpha subunit type 1 subfamily. Tetramer of two alpha and two beta subunits. Mg(2+) serves as cofactor.

The protein localises to the cytoplasm. The enzyme catalyses tRNA(Phe) + L-phenylalanine + ATP = L-phenylalanyl-tRNA(Phe) + AMP + diphosphate + H(+). The chain is Phenylalanine--tRNA ligase alpha subunit from Mycobacterium bovis (strain ATCC BAA-935 / AF2122/97).